A 391-amino-acid chain; its full sequence is Zinc finger protein 414 (391 aa).

The interval 1-110 (MDEEPSGPSL…RRPPPGKQIP (110 aa)) is disordered. Over residues 84-93 (GPTSTVSGTS) the composition is skewed to polar residues. 3 consecutive C2H2-type zinc fingers follow at residues 109-133 (IPCS…LRTH), 145-169 (FRCS…GKLH), and 176-201 (FKCE…CAEH). Disordered regions lie at residues 201–243 (HAQS…LEPF), 274–312 (LAAA…SGHA), and 344–391 (HLED…FSPL). A compositionally biased stretch (basic and acidic residues) spans 214 to 226 (LDRESPASERPPE). Residues 227–236 (SDPAPAPGLP) show a composition bias toward pro residues. Residues 274 to 286 (LAAAPGPPASSAA) are compositionally biased toward low complexity. Residues 326 to 348 (YSCMQCAFSTASRPAMTLHLEDH) form a C2H2-type 4 zinc finger. The span at 353-372 (PAAPAPGQPRPDAPADPAPL) shows a compositional bias: pro residues.

It belongs to the krueppel C2H2-type zinc-finger protein family.

The protein resides in the nucleus. Its function is as follows. May be involved in transcriptional regulation. In Bos taurus (Bovine), this protein is Zinc finger protein 414 (ZNF414).